A 121-amino-acid chain; its full sequence is Large ribosomal subunit protein bL12 (121 aa).

It belongs to the bacterial ribosomal protein bL12 family. In terms of assembly, homodimer. Part of the ribosomal stalk of the 50S ribosomal subunit. Forms a multimeric L10(L12)X complex, where L10 forms an elongated spine to which 2 to 4 L12 dimers bind in a sequential fashion. Binds GTP-bound translation factors.

Forms part of the ribosomal stalk which helps the ribosome interact with GTP-bound translation factors. Is thus essential for accurate translation. This chain is Large ribosomal subunit protein bL12, found in Lachnospira eligens (strain ATCC 27750 / DSM 3376 / VPI C15-48 / C15-B4) (Eubacterium eligens).